The primary structure comprises 226 residues: ATP synthase F(0) complex subunit a (226 aa).

6 helical membrane passes run 12-32, 68-88, 97-117, 138-158, 164-184, and 200-222; these read PTIL…LLIP, WSLM…LGLL, QLSM…ATGF, IPML…ALAV, ITAG…LSTI, and TTLE…SLYL.

It belongs to the ATPase A chain family. Component of the ATP synthase complex composed at least of ATP5F1A/subunit alpha, ATP5F1B/subunit beta, ATP5MC1/subunit c (homooctomer), MT-ATP6/subunit a, MT-ATP8/subunit 8, ATP5ME/subunit e, ATP5MF/subunit f, ATP5MG/subunit g, ATP5MK/subunit k, ATP5MJ/subunit j, ATP5F1C/subunit gamma, ATP5F1D/subunit delta, ATP5F1E/subunit epsilon, ATP5PF/subunit F6, ATP5PB/subunit b, ATP5PD/subunit d, ATP5PO/subunit OSCP. ATP synthase complex consists of a soluble F(1) head domain (subunits alpha(3) and beta(3)) - the catalytic core - and a membrane F(0) domain - the membrane proton channel (subunits c, a, 8, e, f, g, k and j). These two domains are linked by a central stalk (subunits gamma, delta, and epsilon) rotating inside the F1 region and a stationary peripheral stalk (subunits F6, b, d, and OSCP). Interacts with DNAJC30; interaction is direct.

It localises to the mitochondrion inner membrane. It carries out the reaction H(+)(in) = H(+)(out). Its function is as follows. Subunit a, of the mitochondrial membrane ATP synthase complex (F(1)F(0) ATP synthase or Complex V) that produces ATP from ADP in the presence of a proton gradient across the membrane which is generated by electron transport complexes of the respiratory chain. ATP synthase complex consist of a soluble F(1) head domain - the catalytic core - and a membrane F(1) domain - the membrane proton channel. These two domains are linked by a central stalk rotating inside the F(1) region and a stationary peripheral stalk. During catalysis, ATP synthesis in the catalytic domain of F(1) is coupled via a rotary mechanism of the central stalk subunits to proton translocation. With the subunit c (ATP5MC1), forms the proton-conducting channel in the F(0) domain, that contains two crucial half-channels (inlet and outlet) that facilitate proton movement from the mitochondrial intermembrane space (IMS) into the matrix. Protons are taken up via the inlet half-channel and released through the outlet half-channel, following a Grotthuss mechanism. In Hylobates lar (Lar gibbon), this protein is ATP synthase F(0) complex subunit a.